The following is an 82-amino-acid chain: Putative membrane protein insertion efficiency factor (82 aa).

The tract at residues 63 to 82 (GGFDPVPLKKDKNSKTTHHH) is disordered.

This sequence belongs to the UPF0161 family.

The protein localises to the cell membrane. In terms of biological role, could be involved in insertion of integral membrane proteins into the membrane. This chain is Putative membrane protein insertion efficiency factor, found in Staphylococcus epidermidis (strain ATCC 35984 / DSM 28319 / BCRC 17069 / CCUG 31568 / BM 3577 / RP62A).